The following is a 286-amino-acid chain: Phosducin-like protein 2 (286 aa).

Phosphoserine is present on residues S35 and S62. The segment at F96–D286 is thioredoxin fold.

This sequence belongs to the phosducin family. As to quaternary structure, interacts with the G protein beta-gamma subunit complex (STE4-STE18 complex). Interacts with CCT2; this interaction leads to inhibition of CCT complex mediated actin folding.

It localises to the cytoplasm. In terms of biological role, essential for cell growth. Inhibits early G-protein signaling events following pheromone stimulation. Inhibits the folding activity of the chaperonin-containing T-complex (CCT) CCT2 which leads to inhibition of cytoskeletal actin folding. Plays a role in cell cycle progression in G1/S phase. This chain is Phosducin-like protein 2, found in Saccharomyces cerevisiae (strain ATCC 204508 / S288c) (Baker's yeast).